Consider the following 400-residue polypeptide: Acetate kinase (400 aa).

Asn10 provides a ligand contact to Mg(2+). Lys17 contacts ATP. Arg91 contacts substrate. Asp150 (proton donor/acceptor) is an active-site residue. ATP contacts are provided by residues 210–214 (HLGGG), 285–287 (DFR), and 333–337 (GIGEN). Residue Glu387 coordinates Mg(2+).

Belongs to the acetokinase family. Homodimer. Requires Mg(2+) as cofactor. It depends on Mn(2+) as a cofactor.

The protein localises to the cytoplasm. The enzyme catalyses acetate + ATP = acetyl phosphate + ADP. It functions in the pathway metabolic intermediate biosynthesis; acetyl-CoA biosynthesis; acetyl-CoA from acetate: step 1/2. Functionally, catalyzes the formation of acetyl phosphate from acetate and ATP. Can also catalyze the reverse reaction. The sequence is that of Acetate kinase from Buchnera aphidicola subsp. Baizongia pistaciae (strain Bp).